Consider the following 502-residue polypeptide: Na(+)/H(+) antiporter NhaB (502 aa).

The next 11 helical transmembrane spans lie at 27 to 49 (AFLV…VLIL), 66 to 86 (PGGL…ESVF), 95 to 115 (VILL…LLLY), 128 to 148 (IVLS…LDAL), 149 to 169 (TVTA…HQFA), 241 to 261 (FFLQ…VTCI), 299 to 318 (IAAL…SLAL), 350 to 370 (FEEA…VAVI), 394 to 414 (MFFI…VATV), 450 to 470 (ATPN…APLI), and 477 to 497 (MVLM…IAVY).

Belongs to the NhaB Na(+)/H(+) (TC 2.A.34) antiporter family.

It localises to the cell inner membrane. It carries out the reaction 2 Na(+)(in) + 3 H(+)(out) = 2 Na(+)(out) + 3 H(+)(in). In terms of biological role, na(+)/H(+) antiporter that extrudes sodium in exchange for external protons. This Teredinibacter turnerae (strain ATCC 39867 / T7901) protein is Na(+)/H(+) antiporter NhaB.